The sequence spans 408 residues: Na(+)/H(+) antiporter NhaA (408 aa).

The next 12 helical transmembrane spans lie at leucine 42 to phenylalanine 62, valine 69 to leucine 89, alanine 110 to valine 130, glycine 140 to glycine 160, isoleucine 169 to phenylalanine 189, alanine 192 to leucine 212, phenylalanine 215 to leucine 235, glycine 238 to threonine 258, valine 277 to leucine 297, leucine 312 to leucine 332, leucine 346 to leucine 366, and isoleucine 380 to threonine 400.

It belongs to the NhaA Na(+)/H(+) (TC 2.A.33) antiporter family.

Its subcellular location is the cell inner membrane. The catalysed reaction is Na(+)(in) + 2 H(+)(out) = Na(+)(out) + 2 H(+)(in). Na(+)/H(+) antiporter that extrudes sodium in exchange for external protons. The sequence is that of Na(+)/H(+) antiporter NhaA from Nitrobacter hamburgensis (strain DSM 10229 / NCIMB 13809 / X14).